A 144-amino-acid polypeptide reads, in one-letter code: 3-dehydroquinate dehydratase (144 aa).

Tyr22 (proton acceptor) is an active-site residue. Asn71, His77, and Asp84 together coordinate substrate. Catalysis depends on His97, which acts as the Proton donor. Residues 98 to 99 (IS) and Arg108 contribute to the substrate site.

This sequence belongs to the type-II 3-dehydroquinase family. As to quaternary structure, homododecamer.

The catalysed reaction is 3-dehydroquinate = 3-dehydroshikimate + H2O. It participates in metabolic intermediate biosynthesis; chorismate biosynthesis; chorismate from D-erythrose 4-phosphate and phosphoenolpyruvate: step 3/7. Functionally, catalyzes a trans-dehydration via an enolate intermediate. The chain is 3-dehydroquinate dehydratase (aroQ) from Thermotoga maritima (strain ATCC 43589 / DSM 3109 / JCM 10099 / NBRC 100826 / MSB8).